Here is a 1340-residue protein sequence, read N- to C-terminus: Thioester-containing protein 1 allele S1 (1340 aa).

The N-terminal stretch at 1–21 (MWQFIRSRILTVIIFIGAAHG) is a signal peptide. Asparagine 68, asparagine 199, asparagine 242, asparagine 312, and asparagine 481 each carry an N-linked (GlcNAc...) asparagine glycan. The may contain the cleavage site stretch occupies residues 580–609 (ENEFDIFHSLGLFARTLDDILFDSANEKTG). N-linked (GlcNAc...) asparagine glycans are attached at residues asparagine 637, asparagine 728, asparagine 813, and asparagine 828. A cross-link (isoglutamyl cysteine thioester (Cys-Gln)) is located at residues 859 to 862 (CGEQ). Intrachain disulfides connect cysteine 1217/cysteine 1283, cysteine 1326/cysteine 1338, and cysteine 1329/cysteine 1334.

In terms of assembly, heterodimer of a TEP1-N chain and an TEP1-C chain non-covalently linked. Forms a complex composed of TEP1-N and TEP1-C heterodimer, LRIM1 and APL1C; the interaction stabilizes TEP1-N and TEP1-C heterodimer, prevents its binding to tissues while circulating in the hemolymph and protects the thioester bond from hydrolysis. Mature TEP1 and to a lesser extent full-length TEP1 interact with SPCLIP1; the interaction is induced by microbial infection. In the hemolymph, the full-length protein is cleaved by an unknow protease into a 75kDa N-terminal (TEP1-N) chain and an 80kDa C-terminal (TEP1-C) chain which remain non-covalently linked. The TEP1-C chain contains the thioester bond which covalently binds to the pathogen surface. Cleavage is induced by bacterial infection or aseptic wound injury. During embryonic and pupal development, the cleaved form is the predominant form. In terms of processing, N-glycosylated. Specifically expressed in hemocytes (at protein level).

It localises to the secreted. Plays an essential role in the innate immune response to bacteria and protozoa infection. After proteolytic cleavage, the protein C-terminus binds covalently through a thioester bond to the pathogen surface resulting in pathogen clearance either by melanization or lysis. Initiate the recruitment and activation of a cascade of proteases, mostly of CLIP-domain serine proteases, which leads to the proteolytic cleavage of the prophenoloxidase (PPO) into active phenoloxidase (PO), the rate-limiting enzyme in melanin biosynthesis. In response to parasite P.berghei-mediated infection, binds to and mediates killing of ookinetes, as they egress from midgut epithelial cells into the basal labyrinth, by both lysis and melanization. During bacterial infection, binds to both Gram-positive and Gram-negative bacteria but only promotes phagocytosis of Gram-negative bacteria. Promotes the accumulation of SPCLIP1 onto the surface of P.berghei ookinetes and bacterium E.coli which leads to the melanization of the pathogen. Recruits CLIPA2 to bacteria surface. In response to bacterial infection, required for periostial hemocyte aggregation, but not for the aggregation of sessile hemocytes in non-periostial regions. During the late stage of fungus B.bassiana-mediated infection, required for the initiation of hyphae melanization by binding to the surface of hyphae and recruiting prophenoloxidase PPO to them. Plays a role in male fertility by binding to defective sperm cells and promoting their removal during spermatogenesis. Its function is as follows. Binds covalently through a thioester bond to the pathogen surface resulting in pathogen clearance. This Anopheles gambiae (African malaria mosquito) protein is Thioester-containing protein 1 allele S1.